An 84-amino-acid chain; its full sequence is NADH dehydrogenase [ubiquinone] 1 alpha subcomplex subunit 3 (84 aa).

An N-acetylalanine modification is found at alanine 2. A helical transmembrane segment spans residues leucine 19–threonine 39. Residues aspartate 59–leucine 84 are disordered.

This sequence belongs to the complex I NDUFA3 subunit family. In terms of assembly, complex I is composed of 45 different subunits.

It localises to the mitochondrion inner membrane. Functionally, accessory subunit of the mitochondrial membrane respiratory chain NADH dehydrogenase (Complex I), that is believed not to be involved in catalysis. Complex I functions in the transfer of electrons from NADH to the respiratory chain. The immediate electron acceptor for the enzyme is believed to be ubiquinone. This Mus musculus (Mouse) protein is NADH dehydrogenase [ubiquinone] 1 alpha subcomplex subunit 3 (Ndufa3).